The chain runs to 567 residues: Urease subunit alpha (567 aa).

The region spanning 129-567 (GGIDTHIHWI…LPMAQRYFLF (439 aa)) is the Urease domain. Ni(2+) contacts are provided by His134, His136, and Lys217. At Lys217 the chain carries N6-carboxylysine. His219 is a binding site for substrate. 2 residues coordinate Ni(2+): His246 and His272. His320 functions as the Proton donor in the catalytic mechanism. Asp360 serves as a coordination point for Ni(2+).

The protein belongs to the metallo-dependent hydrolases superfamily. Urease alpha subunit family. In terms of assembly, heterotrimer of UreA (gamma), UreB (beta) and UreC (alpha) subunits. Three heterotrimers associate to form the active enzyme. Ni cation serves as cofactor. Post-translationally, carboxylation allows a single lysine to coordinate two nickel ions.

The protein resides in the cytoplasm. It catalyses the reaction urea + 2 H2O + H(+) = hydrogencarbonate + 2 NH4(+). Its pathway is nitrogen metabolism; urea degradation; CO(2) and NH(3) from urea (urease route): step 1/1. The protein is Urease subunit alpha of Enterobacter sp. (strain 638).